Reading from the N-terminus, the 181-residue chain is Avenin-like a6 (181 aa).

The N-terminal stretch at 1-19 (MKNLFILALLAFTATSAVA) is a signal peptide.

The protein belongs to the prolamin family. Post-translationally, contains 7 disulfide bonds.

In terms of biological role, seed storage protein. Not integrated in the gluten polymer through disulfide bonds, unless incorporated by reduction and reoxidation during dough making. Increases dough strength and bread volume, but decreases dough stability when added into a base wheat flour. This chain is Avenin-like a6, found in Triticum aestivum (Wheat).